The following is a 347-amino-acid chain: MSEQAIRLTQYSHGAGCGCKISPKVLETILHSDQAKFIDPNLLVGNETRDDAAVYDLGNGTSVISTTDFFMPIVDNPFDFGRIAATNAISDIYAMGGKPIMAIAILGWPVNTLAPEIAREVVEGGRFACQQAGIALAGGHSIDAPEPIFGLAVTGVVPTERVKKNSTAEAGCKLFLTKPLGIGVLTTAEKKSLLRPEHQNLATEVMCTMNKAGADFAEIDGVRAMTDVTGFGLLGHLSEVCQGAGLQAELWYEAVPKLPGVEEYIAQGAVPGGTSRNFASYGHLMGDMPDAWRSLLCDPQTSGGLLLAVEPAAEAQVQAVAAKHGITLSAIGELKTARGGRPMVEIR.

Cys17 is a catalytic residue. ATP is bound by residues Lys20 and 48–50; that span reads TRD. Residue Asp51 coordinates Mg(2+). ATP contacts are provided by residues Asp68, Asp91, and 139–141; that span reads GHS. Asp91 is a binding site for Mg(2+). Asp227 provides a ligand contact to Mg(2+).

Belongs to the selenophosphate synthase 1 family. Class I subfamily. In terms of assembly, homodimer. Mg(2+) is required as a cofactor.

The catalysed reaction is hydrogenselenide + ATP + H2O = selenophosphate + AMP + phosphate + 2 H(+). Its function is as follows. Synthesizes selenophosphate from selenide and ATP. This Cronobacter sakazakii (strain ATCC BAA-894) (Enterobacter sakazakii) protein is Selenide, water dikinase.